The following is a 441-amino-acid chain: Histidine--tRNA ligase (441 aa).

It belongs to the class-II aminoacyl-tRNA synthetase family. As to quaternary structure, homodimer.

The protein localises to the cytoplasm. It catalyses the reaction tRNA(His) + L-histidine + ATP = L-histidyl-tRNA(His) + AMP + diphosphate + H(+). This is Histidine--tRNA ligase from Koribacter versatilis (strain Ellin345).